A 146-amino-acid polypeptide reads, in one-letter code: MKVLLIKDVKGLGKAGEIKNAKDGYARNFLIPKGFAKLATDDVIKEWQEEQKRKEEELKKELAELNELKEKIESVTLHIKHKLGANGQLYGAITNKEVAEHLKEHGIEIDKKHIDMKQIKTVGEYTVDVKLGHGIHAKLKIVVEGE.

Belongs to the bacterial ribosomal protein bL9 family.

Binds to the 23S rRNA. The protein is Large ribosomal subunit protein bL9 of Nautilia profundicola (strain ATCC BAA-1463 / DSM 18972 / AmH).